We begin with the raw amino-acid sequence, 225 residues long: UPF0758 protein Shal_0429 (225 aa).

Positions I102–I224 constitute an MPN domain. 3 residues coordinate Zn(2+): H173, H175, and D186. The JAMM motif motif lies at H173 to D186.

The protein belongs to the UPF0758 family.

The polypeptide is UPF0758 protein Shal_0429 (Shewanella halifaxensis (strain HAW-EB4)).